A 313-amino-acid chain; its full sequence is Ribosomal protein L11 methyltransferase (313 aa).

S-adenosyl-L-methionine-binding residues include threonine 164, glycine 185, aspartate 207, and asparagine 249.

Belongs to the methyltransferase superfamily. PrmA family.

It localises to the cytoplasm. The enzyme catalyses L-lysyl-[protein] + 3 S-adenosyl-L-methionine = N(6),N(6),N(6)-trimethyl-L-lysyl-[protein] + 3 S-adenosyl-L-homocysteine + 3 H(+). Functionally, methylates ribosomal protein L11. This is Ribosomal protein L11 methyltransferase from Clostridium perfringens (strain ATCC 13124 / DSM 756 / JCM 1290 / NCIMB 6125 / NCTC 8237 / Type A).